Here is a 101-residue protein sequence, read N- to C-terminus: Small ribosomal subunit protein uS14 (101 aa).

This sequence belongs to the universal ribosomal protein uS14 family. As to quaternary structure, part of the 30S ribosomal subunit. Contacts proteins S3 and S10.

Binds 16S rRNA, required for the assembly of 30S particles and may also be responsible for determining the conformation of the 16S rRNA at the A site. In Cellvibrio japonicus (strain Ueda107) (Pseudomonas fluorescens subsp. cellulosa), this protein is Small ribosomal subunit protein uS14.